Reading from the N-terminus, the 597-residue chain is HECT-type ubiquitin ligase-interacting protein creD (597 aa).

3 disordered regions span residues 375–398 (EVDP…GTLS), 439–492 (ASEH…MATP), and 576–597 (SRSH…RGRA). Polar residues predominate over residues 452-466 (GPPSGSNTHGSNTHA). A compositionally biased stretch (basic and acidic residues) spans 472-483 (LSRRASDEDVHD).

The protein belongs to the arrestin family. Interacts with hulA.

In terms of biological role, component of the regulatory network controlling carbon source utilization through ubiquitination and deubiquitination involving creA, creB, creC, creD and acrB. May be involved in signaling by recognizing appropriately phosphorylated substrates via its arrestin domains and then recruit a HECT-type ubiquitin ligase such as hulA, leading to ubiquitination of the substrate, providing a link between ubiquitination and phosphorylation in protein regulation and stability. In Emericella nidulans (strain FGSC A4 / ATCC 38163 / CBS 112.46 / NRRL 194 / M139) (Aspergillus nidulans), this protein is HECT-type ubiquitin ligase-interacting protein creD (creD).